Here is a 352-residue protein sequence, read N- to C-terminus: MKKIVFTGGGTVGHVTLNLLLMPKFIEDGWEVHYIGDKRGIEHQEILKSGLDVTFHSIATGKLRRYFSWQNMLDVFKVGWGIVQSLFIMLRLRPQTLFSKGGFVSVPPVIAARVSGVPVFIHESDLSMGLANKIAYKFATKMYSTFEQASSLSKVEHVGAVTKVSDQKNPEPDELVDIQSHFNHKLPTVLFVGGSAGARVFNQLVTDHKKELTERYNIINLTGDSSLNELSQNLFRVDYVTDLYQPLMELADIVVTRGGANTIFELLAIAKLHVIVPLGREASRGDQIENAAYFVKKGYAEDLQESDLTLDSLEEKLSHLLSHKEDYQAKMKASTELKSLADFYQLLKKDLS.

The UDP-N-acetyl-alpha-D-glucosamine site is built by Ser-195 and Gln-287.

This sequence belongs to the glycosyltransferase 28 family. MurG subfamily.

It localises to the cell membrane. The catalysed reaction is Mur2Ac(oyl-L-Ala-gamma-D-Glu-L-Lys-D-Ala-D-Ala)-di-trans,octa-cis-undecaprenyl diphosphate + UDP-N-acetyl-alpha-D-glucosamine = beta-D-GlcNAc-(1-&gt;4)-Mur2Ac(oyl-L-Ala-gamma-D-Glu-L-Lys-D-Ala-D-Ala)-di-trans,octa-cis-undecaprenyl diphosphate + UDP + H(+). Its pathway is cell wall biogenesis; peptidoglycan biosynthesis. Cell wall formation. Catalyzes the transfer of a GlcNAc subunit on undecaprenyl-pyrophosphoryl-MurNAc-pentapeptide (lipid intermediate I) to form undecaprenyl-pyrophosphoryl-MurNAc-(pentapeptide)GlcNAc (lipid intermediate II). This chain is UDP-N-acetylglucosamine--N-acetylmuramyl-(pentapeptide) pyrophosphoryl-undecaprenol N-acetylglucosamine transferase, found in Streptococcus pneumoniae (strain 70585).